The sequence spans 142 residues: Transcriptional regulator MraZ (142 aa).

SpoVT-AbrB domains follow at residues Ala-5 to Glu-51 and Ala-77 to Thr-120.

The protein belongs to the MraZ family. Forms oligomers.

Its subcellular location is the cytoplasm. It localises to the nucleoid. The sequence is that of Transcriptional regulator MraZ from Burkholderia multivorans (strain ATCC 17616 / 249).